Consider the following 141-residue polypeptide: MATIKVDVVSAEEQIFSGEAKFVALPGETGELGILPGHTPLITRIRPGAVRIEVEGGNDEFVFVAGGILEVQPGAVTVLADTAIRGKDLDAAKAEEARKRAEETLQNVKSDLDLAKAQSELATAMAQLEAIQRLAKIRSRH.

This sequence belongs to the ATPase epsilon chain family. In terms of assembly, F-type ATPases have 2 components, CF(1) - the catalytic core - and CF(0) - the membrane proton channel. CF(1) has five subunits: alpha(3), beta(3), gamma(1), delta(1), epsilon(1). CF(0) has three main subunits: a, b and c.

It localises to the cell inner membrane. In terms of biological role, produces ATP from ADP in the presence of a proton gradient across the membrane. The sequence is that of ATP synthase epsilon chain from Burkholderia cenocepacia (strain ATCC BAA-245 / DSM 16553 / LMG 16656 / NCTC 13227 / J2315 / CF5610) (Burkholderia cepacia (strain J2315)).